A 434-amino-acid polypeptide reads, in one-letter code: Nicotinate phosphoribosyltransferase (434 aa).

Histidine 242 carries the phosphohistidine; by autocatalysis modification.

The protein belongs to the NAPRTase family. In terms of processing, transiently phosphorylated on a His residue during the reaction cycle. Phosphorylation strongly increases the affinity for substrates and increases the rate of nicotinate D-ribonucleotide production. Dephosphorylation regenerates the low-affinity form of the enzyme, leading to product release.

It carries out the reaction nicotinate + 5-phospho-alpha-D-ribose 1-diphosphate + ATP + H2O = nicotinate beta-D-ribonucleotide + ADP + phosphate + diphosphate. It participates in cofactor biosynthesis; NAD(+) biosynthesis; nicotinate D-ribonucleotide from nicotinate: step 1/1. Catalyzes the synthesis of beta-nicotinate D-ribonucleotide from nicotinate and 5-phospho-D-ribose 1-phosphate at the expense of ATP. The protein is Nicotinate phosphoribosyltransferase of Bartonella quintana (strain Toulouse) (Rochalimaea quintana).